The following is a 327-amino-acid chain: Phenylalanine--tRNA ligase alpha subunit (327 aa).

A Mg(2+)-binding site is contributed by Glu252.

It belongs to the class-II aminoacyl-tRNA synthetase family. Phe-tRNA synthetase alpha subunit type 1 subfamily. Tetramer of two alpha and two beta subunits. Mg(2+) serves as cofactor.

Its subcellular location is the cytoplasm. It catalyses the reaction tRNA(Phe) + L-phenylalanine + ATP = L-phenylalanyl-tRNA(Phe) + AMP + diphosphate + H(+). The sequence is that of Phenylalanine--tRNA ligase alpha subunit from Pectobacterium atrosepticum (strain SCRI 1043 / ATCC BAA-672) (Erwinia carotovora subsp. atroseptica).